The sequence spans 311 residues: Ribosomal RNA small subunit methyltransferase H (311 aa).

S-adenosyl-L-methionine is bound by residues 33–35, D53, F80, D101, and Q108; that span reads AGH.

This sequence belongs to the methyltransferase superfamily. RsmH family.

The protein localises to the cytoplasm. The enzyme catalyses cytidine(1402) in 16S rRNA + S-adenosyl-L-methionine = N(4)-methylcytidine(1402) in 16S rRNA + S-adenosyl-L-homocysteine + H(+). Its function is as follows. Specifically methylates the N4 position of cytidine in position 1402 (C1402) of 16S rRNA. The chain is Ribosomal RNA small subunit methyltransferase H from Geobacter sulfurreducens (strain ATCC 51573 / DSM 12127 / PCA).